An 88-amino-acid chain; its full sequence is Large ribosomal subunit protein bL31B (88 aa).

Belongs to the bacterial ribosomal protein bL31 family. Type B subfamily. In terms of assembly, part of the 50S ribosomal subunit.

The chain is Large ribosomal subunit protein bL31B from Corynebacterium glutamicum (strain R).